Reading from the N-terminus, the 457-residue chain is Multidrug resistance protein MdtK (457 aa).

12 consecutive transmembrane segments (helical) span residues 11 to 31 (LLALAIPVILAQVAQTAMGFV), 53 to 73 (IWLPAILFGHGLLLALTPVIA), 93 to 113 (WLAGFVSVLVMIVLWNAGYII), 127 to 147 (AVGYLRALLWGAPGYLFFQVA), 160 to 180 (GMVMGFLGLLVNIPVNYIFIY), 188 to 208 (LGGIGCGVATAAVYWVMFIAM), 243 to 263 (LPIALALFFEVTLFAVVALLV), 276 to 296 (IALNFSSLMFVLPMSLAAAVT), 314 to 334 (AARTGLGVGICMAVVTAIFTV), 350 to 370 (VVALAAQLMLLAAVYQISDSI), 387 to 407 (IFFITFTAYWVLGLPSGYILA), and 418 to 438 (PAGFWMGFIIGLTSAAVLMML).

The protein belongs to the multi antimicrobial extrusion (MATE) (TC 2.A.66.1) family. MdtK subfamily.

The protein localises to the cell inner membrane. Its function is as follows. Multidrug efflux pump that functions probably as a Na(+)/drug antiporter. The sequence is that of Multidrug resistance protein MdtK from Salmonella agona (strain SL483).